The following is an 89-amino-acid chain: Small ribosomal subunit protein uS15 (89 aa).

This sequence belongs to the universal ribosomal protein uS15 family. In terms of assembly, part of the 30S ribosomal subunit. Forms a bridge to the 50S subunit in the 70S ribosome, contacting the 23S rRNA.

In terms of biological role, one of the primary rRNA binding proteins, it binds directly to 16S rRNA where it helps nucleate assembly of the platform of the 30S subunit by binding and bridging several RNA helices of the 16S rRNA. Its function is as follows. Forms an intersubunit bridge (bridge B4) with the 23S rRNA of the 50S subunit in the ribosome. The sequence is that of Small ribosomal subunit protein uS15 from Proteus mirabilis (strain HI4320).